The following is a 246-amino-acid chain: Phosphomannomutase 2 (246 aa).

N-acetylalanine is present on Ala-2. Catalysis depends on Asp-12, which acts as the Nucleophile. 2 residues coordinate Mg(2+): Asp-12 and Asp-14. Asp-14 acts as the Proton donor/acceptor in catalysis. The alpha-D-mannose 1-phosphate site is built by Arg-21, Arg-123, Arg-134, and Arg-141. Lys-149 carries the post-translational modification N6-acetyllysine. Residues Ser-179 and Asp-181 each contribute to the alpha-D-mannose 1-phosphate site. Positions 209, 221, 223, and 226 each coordinate Mg(2+).

It belongs to the eukaryotic PMM family. Homodimer.

It is found in the cytoplasm. It carries out the reaction alpha-D-mannose 1-phosphate = D-mannose 6-phosphate. The protein operates within nucleotide-sugar biosynthesis; GDP-alpha-D-mannose biosynthesis; alpha-D-mannose 1-phosphate from D-fructose 6-phosphate: step 2/2. Its function is as follows. Involved in the synthesis of the GDP-mannose and dolichol-phosphate-mannose required for a number of critical mannosyl transfer reactions. The protein is Phosphomannomutase 2 (PMM2) of Macaca fascicularis (Crab-eating macaque).